We begin with the raw amino-acid sequence, 223 residues long: Endonuclease NucS (223 aa).

Belongs to the NucS endonuclease family.

The protein localises to the cytoplasm. Its function is as follows. Cleaves both 3' and 5' ssDNA extremities of branched DNA structures. This chain is Endonuclease NucS, found in Mycobacterium marinum (strain ATCC BAA-535 / M).